We begin with the raw amino-acid sequence, 504 residues long: AMP phosphorylase 1 (504 aa).

Residues Gly169, 195–200 (SRAITS), and Thr204 each bind AMP. Residue Asp257 is the Proton donor of the active site. Positions 265 and 289 each coordinate AMP.

Belongs to the thymidine/pyrimidine-nucleoside phosphorylase family. Type 2 subfamily.

The enzyme catalyses AMP + phosphate = alpha-D-ribose 1,5-bisphosphate + adenine. It catalyses the reaction CMP + phosphate = cytosine + alpha-D-ribose 1,5-bisphosphate. The catalysed reaction is UMP + phosphate = alpha-D-ribose 1,5-bisphosphate + uracil. In terms of biological role, catalyzes the conversion of AMP and phosphate to adenine and ribose 1,5-bisphosphate (R15P). Exhibits phosphorylase activity toward CMP and UMP in addition to AMP. Functions in an archaeal AMP degradation pathway, together with R15P isomerase and RubisCO. The protein is AMP phosphorylase 1 of Archaeoglobus fulgidus (strain ATCC 49558 / DSM 4304 / JCM 9628 / NBRC 100126 / VC-16).